Here is a 459-residue protein sequence, read N- to C-terminus: Putrescine aminotransferase (459 aa).

Pyridoxal 5'-phosphate contacts are provided by residues 150–151 (GT) and Q274. The residue at position 300 (K300) is an N6-(pyridoxal phosphate)lysine. T332 is a pyridoxal 5'-phosphate binding site.

It belongs to the class-III pyridoxal-phosphate-dependent aminotransferase family. Putrescine aminotransferase subfamily. Pyridoxal 5'-phosphate serves as cofactor.

The catalysed reaction is an alkane-alpha,omega-diamine + 2-oxoglutarate = an omega-aminoaldehyde + L-glutamate. The enzyme catalyses putrescine + 2-oxoglutarate = 1-pyrroline + L-glutamate + H2O. It catalyses the reaction cadaverine + 2-oxoglutarate = 5-aminopentanal + L-glutamate. It participates in amine and polyamine degradation; putrescine degradation; 4-aminobutanal from putrescine (transaminase route): step 1/1. Catalyzes the aminotransferase reaction from putrescine to 2-oxoglutarate, leading to glutamate and 4-aminobutanal, which spontaneously cyclizes to form 1-pyrroline. This is the first step in one of two pathways for putrescine degradation, where putrescine is converted into 4-aminobutanoate (gamma-aminobutyrate or GABA) via 4-aminobutanal. Also functions as a cadaverine transaminase in a a L-lysine degradation pathway to succinate that proceeds via cadaverine, glutarate and L-2-hydroxyglutarate. This Escherichia coli (strain ATCC 8739 / DSM 1576 / NBRC 3972 / NCIMB 8545 / WDCM 00012 / Crooks) protein is Putrescine aminotransferase.